We begin with the raw amino-acid sequence, 277 residues long: Small ribosomal subunit protein uS2 (277 aa).

Residues 254–277 (LAGAGSSALNDSGADLSEANPTEA) form a disordered region.

It belongs to the universal ribosomal protein uS2 family.

In Mycobacterium leprae (strain TN), this protein is Small ribosomal subunit protein uS2 (rpsB).